The primary structure comprises 94 residues: Evasin P1086 (94 aa).

The first 28 residues, 1 to 28 (MAFNVITFLQLAVFVVILFNINLHSASA), serve as a signal peptide directing secretion. 3 cysteine pairs are disulfide-bonded: Cys-48–Cys-67, Cys-52–Cys-69, and Cys-63–Cys-80. Residue Asn-74 is glycosylated (N-linked (GlcNAc...) asparagine).

It localises to the secreted. In terms of biological role, salivary chemokine-binding protein which binds to host chemokines CXCL1, CXCL2, CXCL3, CXCL5, CXCL6, CXCL10, CXCL12 and CXCL13. This chain is Evasin P1086, found in Ixodes ricinus (Common tick).